We begin with the raw amino-acid sequence, 130 residues long: Protein ApaG (130 aa).

The ApaG domain occupies 3-127 (SAMTRSINIL…FSLDSPHAKR (125 aa)).

This is Protein ApaG from Parvibaculum lavamentivorans (strain DS-1 / DSM 13023 / NCIMB 13966).